Reading from the N-terminus, the 220-residue chain is U1 small nuclear ribonucleoprotein C (220 aa).

The Matrin-type zinc finger occupies 4-36 (FFCDYCDVYLTHDSISVRKAHNSGRNHLRNVVD). Residues 197–220 (PLGGFPAGAPLPGAPPGYGPPGAK) form a disordered region. Residues 208-220 (PGAPPGYGPPGAK) show a composition bias toward pro residues.

This sequence belongs to the U1 small nuclear ribonucleoprotein C family. As to quaternary structure, U1 snRNP is composed of the 7 core Sm proteins B/B', D1, D2, D3, E, F and G that assemble in a heptameric protein ring on the Sm site of the small nuclear RNA to form the core snRNP, and at least 3 U1 snRNP-specific proteins U1-70K, U1-A and U1-C. U1-C interacts with U1 snRNA and the 5' splice-site region of the pre-mRNA.

Its subcellular location is the nucleus. Component of the spliceosomal U1 snRNP, which is essential for recognition of the pre-mRNA 5' splice-site and the subsequent assembly of the spliceosome. U1-C is directly involved in initial 5' splice-site recognition for both constitutive and regulated alternative splicing. The interaction with the 5' splice-site seems to precede base-pairing between the pre-mRNA and the U1 snRNA. Stimulates commitment or early (E) complex formation by stabilizing the base pairing of the 5' end of the U1 snRNA and the 5' splice-site region. In Tuber melanosporum (strain Mel28) (Perigord black truffle), this protein is U1 small nuclear ribonucleoprotein C.